The chain runs to 415 residues: Queuine tRNA-ribosyltransferase accessory subunit 2 (415 aa).

Residues Cys-351, Cys-353, Cys-356, and His-382 each contribute to the Zn(2+) site.

The protein belongs to the queuine tRNA-ribosyltransferase family. QTRT2 subfamily. Heterodimer of a catalytic subunit QTRT1 and an accessory subunit QTRT2. Zn(2+) is required as a cofactor.

The protein localises to the cytoplasm. The protein resides in the mitochondrion outer membrane. Its function is as follows. Non-catalytic subunit of the queuine tRNA-ribosyltransferase (TGT) that catalyzes the base-exchange of a guanine (G) residue with queuine (Q) at position 34 (anticodon wobble position) in tRNAs with GU(N) anticodons (tRNA-Asp, -Asn, -His and -Tyr), resulting in the hypermodified nucleoside queuosine (7-(((4,5-cis-dihydroxy-2-cyclopenten-1-yl)amino)methyl)-7-deazaguanosine). This Homo sapiens (Human) protein is Queuine tRNA-ribosyltransferase accessory subunit 2.